A 454-amino-acid polypeptide reads, in one-letter code: UPF0210 protein BL1209 (454 aa).

The protein belongs to the UPF0210 family. As to quaternary structure, homodimer.

This is UPF0210 protein BL1209 from Bifidobacterium longum (strain NCC 2705).